Reading from the N-terminus, the 336-residue chain is UPF0284 protein Pcal_1534 (336 aa).

It belongs to the UPF0284 family.

The sequence is that of UPF0284 protein Pcal_1534 from Pyrobaculum calidifontis (strain DSM 21063 / JCM 11548 / VA1).